A 247-amino-acid chain; its full sequence is 2,3-bisphosphoglycerate-dependent phosphoglycerate mutase (247 aa).

Residues 8 to 15 (RHGESTWN), 21 to 22 (TG), arginine 60, 87 to 90 (ERHY), lysine 98, 114 to 115 (RR), and 183 to 184 (GN) contribute to the substrate site. Histidine 9 (tele-phosphohistidine intermediate) is an active-site residue. Glutamate 87 acts as the Proton donor/acceptor in catalysis.

It belongs to the phosphoglycerate mutase family. BPG-dependent PGAM subfamily. In terms of assembly, homodimer.

The catalysed reaction is (2R)-2-phosphoglycerate = (2R)-3-phosphoglycerate. The protein operates within carbohydrate degradation; glycolysis; pyruvate from D-glyceraldehyde 3-phosphate: step 3/5. Catalyzes the interconversion of 2-phosphoglycerate and 3-phosphoglycerate. The chain is 2,3-bisphosphoglycerate-dependent phosphoglycerate mutase from Leptothrix cholodnii (strain ATCC 51168 / LMG 8142 / SP-6) (Leptothrix discophora (strain SP-6)).